A 244-amino-acid polypeptide reads, in one-letter code: MRVSENFALRVHVDEVDPLRMALAAERLDYEIAVLCLELEAERLNIDDLRWLIEEIRDIREHVESVLVLPGCKLEAESAGALRRAIRRTRPLVYLLAVGGGDPKINRAAVSDTRVDLLSHPERGNPHAGLGKYEIELAREKWTYVEIDLSRLFRREGERLAWQVSRIRDLLRLRRRKRFPTTVALGARDPLELIRPKQVEDLLKLMGFEDSEVKEMCVEAPREILRWNAACKHVFTVPGVVSLG.

Belongs to the eukaryotic/archaeal RNase P protein component 3 family. Consists of a catalytic RNA component and at least 4-5 protein subunits.

The protein localises to the cytoplasm. It carries out the reaction Endonucleolytic cleavage of RNA, removing 5'-extranucleotides from tRNA precursor.. Functionally, part of ribonuclease P, a protein complex that generates mature tRNA molecules by cleaving their 5'-ends. This chain is Ribonuclease P protein component 3, found in Methanopyrus kandleri (strain AV19 / DSM 6324 / JCM 9639 / NBRC 100938).